Here is a 688-residue protein sequence, read N- to C-terminus: Alpha-1,4-glucan:maltose-1-phosphate maltosyltransferase (688 aa).

Alpha-maltose 1-phosphate contacts are provided by K289, Q349, and D384. Catalysis depends on D420, which acts as the Nucleophile. An alpha-maltose 1-phosphate-binding site is contributed by N421. Residue E449 is the Proton donor of the active site. An alpha-maltose 1-phosphate-binding site is contributed by 560–561 (KY).

The protein belongs to the glycosyl hydrolase 13 family. GlgE subfamily. As to quaternary structure, homodimer.

It carries out the reaction alpha-maltose 1-phosphate + [(1-&gt;4)-alpha-D-glucosyl](n) = [(1-&gt;4)-alpha-D-glucosyl](n+2) + phosphate. Its function is as follows. Maltosyltransferase that uses maltose 1-phosphate (M1P) as the sugar donor to elongate linear or branched alpha-(1-&gt;4)-glucans. Is involved in a branched alpha-glucan biosynthetic pathway from trehalose, together with TreS, Mak and GlgB. This is Alpha-1,4-glucan:maltose-1-phosphate maltosyltransferase from Rhodospirillum rubrum (strain ATCC 11170 / ATH 1.1.1 / DSM 467 / LMG 4362 / NCIMB 8255 / S1).